We begin with the raw amino-acid sequence, 117 residues long: MDMRAPAQVFGFLLLWFPGARCDIQMTQSPSSLSASLGERVSLTCRASQDIHGYLNLFQQKPGETIKHLIYETSNLDSGVPKRFSGSRSGSDYSLIIGSLESEDFADYYCLQYASSP.

Residues 1 to 22 form the signal peptide; that stretch reads MDMRAPAQVFGFLLLWFPGARC. A framework-1 region spans residues 23–45; sequence DIQMTQSPSSLSASLGERVSLTC. Residues Cys-45 and Cys-110 are joined by a disulfide bond. Residues 46–56 form a complementarity-determining-1 region; it reads RASQDIHGYLN. The tract at residues 57–71 is framework-2; the sequence is LFQQKPGETIKHLIY. The segment at 72-78 is complementarity-determining-2; it reads ETSNLDS. Residues 79-110 form a framework-3 region; sequence GVPKRFSGSRSGSDYSLIIGSLESEDFADYYC. Residues 111 to 117 are complementarity-determining-3; the sequence is LQYASSP.

The polypeptide is Immunoglobulin kappa variable 9-129 (Mus musculus (Mouse)).